Here is a 187-residue protein sequence, read N- to C-terminus: Elongation factor P (187 aa).

It belongs to the elongation factor P family.

It localises to the cytoplasm. The protein operates within protein biosynthesis; polypeptide chain elongation. In terms of biological role, involved in peptide bond synthesis. Stimulates efficient translation and peptide-bond synthesis on native or reconstituted 70S ribosomes in vitro. Probably functions indirectly by altering the affinity of the ribosome for aminoacyl-tRNA, thus increasing their reactivity as acceptors for peptidyl transferase. The polypeptide is Elongation factor P (Desulforapulum autotrophicum (strain ATCC 43914 / DSM 3382 / VKM B-1955 / HRM2) (Desulfobacterium autotrophicum)).